The following is a 161-amino-acid chain: uncharacterized protein (161 aa).

This is an uncharacterized protein from Mycobacterium bovis (strain ATCC BAA-935 / AF2122/97).